Consider the following 457-residue polypeptide: Argininosuccinate lyase (457 aa).

It belongs to the lyase 1 family. Argininosuccinate lyase subfamily.

It localises to the cytoplasm. It catalyses the reaction 2-(N(omega)-L-arginino)succinate = fumarate + L-arginine. It participates in amino-acid biosynthesis; L-arginine biosynthesis; L-arginine from L-ornithine and carbamoyl phosphate: step 3/3. The chain is Argininosuccinate lyase from Escherichia fergusonii (strain ATCC 35469 / DSM 13698 / CCUG 18766 / IAM 14443 / JCM 21226 / LMG 7866 / NBRC 102419 / NCTC 12128 / CDC 0568-73).